A 205-amino-acid chain; its full sequence is Octanoyltransferase (205 aa).

Positions 30–205 (NLSDELVWLL…ILKQEFHKIF (176 aa)) constitute a BPL/LPL catalytic domain. Residues 68-75 (RGGKYTYH), 140-142 (AFG), and 153-155 (GIA) contribute to the substrate site. Catalysis depends on Cys-171, which acts as the Acyl-thioester intermediate.

It belongs to the LipB family.

The protein resides in the cytoplasm. It carries out the reaction octanoyl-[ACP] + L-lysyl-[protein] = N(6)-octanoyl-L-lysyl-[protein] + holo-[ACP] + H(+). Its pathway is protein modification; protein lipoylation via endogenous pathway; protein N(6)-(lipoyl)lysine from octanoyl-[acyl-carrier-protein]: step 1/2. Functionally, catalyzes the transfer of endogenously produced octanoic acid from octanoyl-acyl-carrier-protein onto the lipoyl domains of lipoate-dependent enzymes. Lipoyl-ACP can also act as a substrate although octanoyl-ACP is likely to be the physiological substrate. The polypeptide is Octanoyltransferase (Wolbachia pipientis subsp. Culex pipiens (strain wPip)).